A 335-amino-acid chain; its full sequence is Anthranilate phosphoribosyltransferase (335 aa).

Residues glycine 79, 82–83 (GD), serine 87, 89–92 (NIST), 107–115 (KHGNRSISS), and serine 119 each bind 5-phospho-alpha-D-ribose 1-diphosphate. Glycine 79 contributes to the anthranilate binding site. Residue serine 91 participates in Mg(2+) binding. Anthranilate is bound at residue asparagine 110. An anthranilate-binding site is contributed by arginine 165. The Mg(2+) site is built by aspartate 224 and glutamate 225.

This sequence belongs to the anthranilate phosphoribosyltransferase family. In terms of assembly, homodimer. Requires Mg(2+) as cofactor.

The catalysed reaction is N-(5-phospho-beta-D-ribosyl)anthranilate + diphosphate = 5-phospho-alpha-D-ribose 1-diphosphate + anthranilate. Its pathway is amino-acid biosynthesis; L-tryptophan biosynthesis; L-tryptophan from chorismate: step 2/5. Functionally, catalyzes the transfer of the phosphoribosyl group of 5-phosphorylribose-1-pyrophosphate (PRPP) to anthranilate to yield N-(5'-phosphoribosyl)-anthranilate (PRA). The protein is Anthranilate phosphoribosyltransferase of Streptococcus mutans serotype c (strain ATCC 700610 / UA159).